Here is a 476-residue protein sequence, read N- to C-terminus: Aspartyl/glutamyl-tRNA(Asn/Gln) amidotransferase subunit B (476 aa).

This sequence belongs to the GatB/GatE family. GatB subfamily. In terms of assembly, heterotrimer of A, B and C subunits.

It catalyses the reaction L-glutamyl-tRNA(Gln) + L-glutamine + ATP + H2O = L-glutaminyl-tRNA(Gln) + L-glutamate + ADP + phosphate + H(+). The catalysed reaction is L-aspartyl-tRNA(Asn) + L-glutamine + ATP + H2O = L-asparaginyl-tRNA(Asn) + L-glutamate + ADP + phosphate + 2 H(+). Functionally, allows the formation of correctly charged Asn-tRNA(Asn) or Gln-tRNA(Gln) through the transamidation of misacylated Asp-tRNA(Asn) or Glu-tRNA(Gln) in organisms which lack either or both of asparaginyl-tRNA or glutaminyl-tRNA synthetases. The reaction takes place in the presence of glutamine and ATP through an activated phospho-Asp-tRNA(Asn) or phospho-Glu-tRNA(Gln). This chain is Aspartyl/glutamyl-tRNA(Asn/Gln) amidotransferase subunit B, found in Listeria monocytogenes serovar 1/2a (strain ATCC BAA-679 / EGD-e).